The primary structure comprises 81 residues: Ubiquitin-like protein NEDD8 (81 aa).

An N6-acetyllysine modification is found at Lys-48. Residues 70–72 (VLA) form an interaction with UBE1C region. Gly-76 is covalently cross-linked (Glycyl lysine isopeptide (Gly-Lys) (interchain with K-? in acceptor proteins)). A propeptide spanning residues 77–81 (GGLGQ) is cleaved from the precursor.

This sequence belongs to the ubiquitin family. Interacts with AHR; interaction is direct. Interacts with NUB1; interaction is direct. Interacts with ESR1. Post-translationally, cleavage of precursor form by UCHL3 or SENP8 is necessary for function. As to expression, expressed in the CA1 region of the hippocampus (at protein level).

The protein localises to the nucleus. Its function is as follows. Ubiquitin-like protein which plays an important role in cell cycle control and embryogenesis via its conjugation to a limited number of cellular proteins, such as cullins or p53/TP53. Attachment of NEDD8 to cullins is critical for the recruitment of E2 to the cullin-RING-based E3 ubiquitin-protein ligase complex, thus facilitating polyubiquitination and proteasomal degradation of cyclins and other regulatory proteins. Attachment of NEDD8 to p53/TP53 inhibits p53/TP53 transcriptional activity. Covalent attachment to its substrates requires prior activation by the E1 complex UBE1C-APPBP1 and linkage to the E2 enzyme UBE2M. The sequence is that of Ubiquitin-like protein NEDD8 (Nedd8) from Rattus norvegicus (Rat).